The primary structure comprises 174 residues: Gamma-crystallin D (174 aa).

Beta/gamma crystallin 'Greek key' domains lie at 2–40 (GKIT…RVDS) and 41–83 (GCWM…RLIP). The tract at residues 84–87 (HAGS) is connecting peptide. Beta/gamma crystallin 'Greek key' domains are found at residues 88-128 (HRIR…NVLE) and 129-171 (GCWV…RRVM).

It belongs to the beta/gamma-crystallin family. In terms of tissue distribution, detected in the superior olivary complex of the auditory hindbrain.

In terms of biological role, crystallins are the dominant structural components of the vertebrate eye lens. In Mus musculus (Mouse), this protein is Gamma-crystallin D (Crygd).